Reading from the N-terminus, the 258-residue chain is Mediator of RNA polymerase II transcription subunit 18 (258 aa).

This sequence belongs to the Mediator complex subunit 18 family. As to quaternary structure, component of the Mediator complex.

The protein resides in the nucleus. Its function is as follows. Component of the Mediator complex, a coactivator involved in the regulated transcription of nearly all RNA polymerase II-dependent genes. Mediator functions as a bridge to convey information from gene-specific regulatory proteins to the basal RNA polymerase II transcription machinery. Mediator is recruited to promoters by direct interactions with regulatory proteins and serves as a scaffold for the assembly of a functional preinitiation complex with RNA polymerase II and the general transcription factors. This chain is Mediator of RNA polymerase II transcription subunit 18 (SRB5), found in Eremothecium gossypii (strain ATCC 10895 / CBS 109.51 / FGSC 9923 / NRRL Y-1056) (Yeast).